Here is a 130-residue protein sequence, read N- to C-terminus: L-aspartate semialdehyde sulfurtransferase iron-sulfur subunit (130 aa).

2 4Fe-4S ferredoxin-type domains span residues 72-101 (RPIHRDEEECVECGACISVCPMNVYSFDET) and 102-130 (WSLCVDEKKCIQCGMCIKMCPHGALKLGE). Residues Cys81, Cys84, Cys87, Cys91, Cys111, Cys114, Cys117, and Cys121 each contribute to the [4Fe-4S] cluster site.

In terms of assembly, may form a complex with MA_1821. It depends on [4Fe-4S] cluster as a cofactor.

The protein operates within amino-acid biosynthesis. Required for O-acetylhomoserine sulfhydrylase (OAHS)-independent homocysteine (Hcy) biosynthesis. Together with MA_1821, catalyzes the condensation of sulfide with aspartate semialdehyde to generate homocysteine. May be involved in the reduction of the disulfide formed in MA_1821. The chain is L-aspartate semialdehyde sulfurtransferase iron-sulfur subunit from Methanosarcina acetivorans (strain ATCC 35395 / DSM 2834 / JCM 12185 / C2A).